The chain runs to 60 residues: MANPKRRWSKARTGKRRSQWKLASPTLVSCPQCHVFKLPHRVCGECGYYDGKQVVKVEAK.

This sequence belongs to the bacterial ribosomal protein bL32 family.

The sequence is that of Large ribosomal subunit protein bL32 from Ruminiclostridium cellulolyticum (strain ATCC 35319 / DSM 5812 / JCM 6584 / H10) (Clostridium cellulolyticum).